A 251-amino-acid polypeptide reads, in one-letter code: Hydroxyacylglutathione hydrolase (251 aa).

Positions 53, 55, 57, 58, 110, 127, and 165 each coordinate Zn(2+).

This sequence belongs to the metallo-beta-lactamase superfamily. Glyoxalase II family. Monomer. It depends on Zn(2+) as a cofactor.

The enzyme catalyses an S-(2-hydroxyacyl)glutathione + H2O = a 2-hydroxy carboxylate + glutathione + H(+). It participates in secondary metabolite metabolism; methylglyoxal degradation; (R)-lactate from methylglyoxal: step 2/2. In terms of biological role, thiolesterase that catalyzes the hydrolysis of S-D-lactoyl-glutathione to form glutathione and D-lactic acid. The polypeptide is Hydroxyacylglutathione hydrolase (Escherichia coli (strain ATCC 8739 / DSM 1576 / NBRC 3972 / NCIMB 8545 / WDCM 00012 / Crooks)).